We begin with the raw amino-acid sequence, 990 residues long: Bifunctional glutamine synthetase adenylyltransferase/adenylyl-removing enzyme (990 aa).

The interval 1–474 (MIFSAITADL…HYAKLFEGDP (474 aa)) is adenylyl removase. An adenylyl transferase region spans residues 478–990 (AKLPPVDYGA…FSRLIGGEDA (513 aa)).

The protein belongs to the GlnE family. Mg(2+) serves as cofactor.

The enzyme catalyses [glutamine synthetase]-O(4)-(5'-adenylyl)-L-tyrosine + phosphate = [glutamine synthetase]-L-tyrosine + ADP. It catalyses the reaction [glutamine synthetase]-L-tyrosine + ATP = [glutamine synthetase]-O(4)-(5'-adenylyl)-L-tyrosine + diphosphate. Functionally, involved in the regulation of glutamine synthetase GlnA, a key enzyme in the process to assimilate ammonia. When cellular nitrogen levels are high, the C-terminal adenylyl transferase (AT) inactivates GlnA by covalent transfer of an adenylyl group from ATP to specific tyrosine residue of GlnA, thus reducing its activity. Conversely, when nitrogen levels are low, the N-terminal adenylyl removase (AR) activates GlnA by removing the adenylyl group by phosphorolysis, increasing its activity. The regulatory region of GlnE binds the signal transduction protein PII (GlnB) which indicates the nitrogen status of the cell. This chain is Bifunctional glutamine synthetase adenylyltransferase/adenylyl-removing enzyme, found in Rhodopseudomonas palustris (strain ATCC BAA-98 / CGA009).